The chain runs to 224 residues: Deoxyribose-phosphate aldolase (224 aa).

Asp92 functions as the Proton donor/acceptor in the catalytic mechanism. The active-site Schiff-base intermediate with acetaldehyde is Lys154. The active-site Proton donor/acceptor is the Lys183.

The protein belongs to the DeoC/FbaB aldolase family. DeoC type 1 subfamily.

It is found in the cytoplasm. The catalysed reaction is 2-deoxy-D-ribose 5-phosphate = D-glyceraldehyde 3-phosphate + acetaldehyde. Its pathway is carbohydrate degradation; 2-deoxy-D-ribose 1-phosphate degradation; D-glyceraldehyde 3-phosphate and acetaldehyde from 2-deoxy-alpha-D-ribose 1-phosphate: step 2/2. Functionally, catalyzes a reversible aldol reaction between acetaldehyde and D-glyceraldehyde 3-phosphate to generate 2-deoxy-D-ribose 5-phosphate. This chain is Deoxyribose-phosphate aldolase, found in Actinobacillus succinogenes (strain ATCC 55618 / DSM 22257 / CCUG 43843 / 130Z).